A 402-amino-acid chain; its full sequence is AA9 family lytic polysaccharide monooxygenase E (402 aa).

The N-terminal stretch at 1 to 16 (MSRLVSFASLLAAVNA) is a signal peptide. A Cu(2+)-binding site is contributed by H17. 2 disulfide bridges follow: C72–C194 and C113–C117. An N-linked (GlcNAc...) asparagine glycan is attached at N75. Position 102 (H102) interacts with Cu(2+). N154 is a glycosylation site (N-linked (GlcNAc...) asparagine). H180 and Q189 together coordinate O2. Y191 serves as a coordination point for Cu(2+). Residues 364–400 (GSNPLYAQCGGLNFKGASGCVAGATCKKMNPYYSQCV) form the CBM1 domain.

Belongs to the polysaccharide monooxygenase AA9 family. It depends on Cu(2+) as a cofactor.

The protein resides in the secreted. The enzyme catalyses [(1-&gt;4)-beta-D-glucosyl]n+m + reduced acceptor + O2 = 4-dehydro-beta-D-glucosyl-[(1-&gt;4)-beta-D-glucosyl]n-1 + [(1-&gt;4)-beta-D-glucosyl]m + acceptor + H2O.. Its function is as follows. Lytic polysaccharide monooxygenase (LPMO) that depolymerizes crystalline and amorphous polysaccharides via the oxidation of scissile alpha- or beta-(1-4)-glycosidic bonds, yielding C1 or C4 oxidation products. Catalysis by LPMOs requires the reduction of the active-site copper from Cu(II) to Cu(I) by a reducing agent and H(2)O(2) or O(2) as a cosubstrate. The polypeptide is AA9 family lytic polysaccharide monooxygenase E (Emericella nidulans (strain FGSC A4 / ATCC 38163 / CBS 112.46 / NRRL 194 / M139) (Aspergillus nidulans)).